Consider the following 282-residue polypeptide: Non-selective voltage-gated ion channel VDAC2 (282 aa).

N-acetylalanine is present on alanine 1. The next 19 membrane-spanning stretches (beta stranded) occupy residues 25-34 (LVKLDVKTKS), 38-46 (VEFTTSGTS), 53-63 (VNGSLETKYKW), 68-75 (LTFTEKWN), 79-88 (TLGTEIAIED), 94-103 (LKLTFDTTFS), 110-119 (SGKVKAAYKQ), 122-129 (VNLGCDVD), 136-144 (AIHGSAVVG), 149-157 (LAGYQMTFD), 162-174 (KLTKNNFAVGYKT), 177-184 (FQLHTNVN), 188-197 (EFAGSIYQKV), 201-210 (METAVNLAWT), 217-226 (RFGIAAKYQL), 230-237 (AAISAKVN), 241-250 (LVGVGYTQTL), 253-262 (GVKLTLSALV), and 272-281 (HKLGLGLELE). Residues 241 to 243 (LVG) and 259 to 263 (SALVD) each bind NAD(+).

Belongs to the eukaryotic mitochondrial porin family. Monomer, homodimer and higher order oligomers; formation of higher order structures is necessary for scramblase activity. In terms of tissue distribution, expressed in skeletal muscle and oocytes.

It localises to the mitochondrion outer membrane. Its subcellular location is the membrane. It catalyses the reaction chloride(in) = chloride(out). It carries out the reaction K(+)(in) = K(+)(out). The catalysed reaction is a 1,2-diacyl-sn-glycero-3-phospho-L-serine(in) = a 1,2-diacyl-sn-glycero-3-phospho-L-serine(out). The enzyme catalyses a 1,2-diacyl-sn-glycero-3-phosphocholine(in) = a 1,2-diacyl-sn-glycero-3-phosphocholine(out). It catalyses the reaction a 1,2-diacyl-sn-glycero-3-phospho-(1D-myo-inositol)(in) = a 1,2-diacyl-sn-glycero-3-phospho-(1D-myo-inositol)(out). Non-selective voltage-gated ion channel that mediates the transport of anions and cations through the mitochondrion outer membrane and plasma membrane. The channel adopts an open conformation at zero mV and a closed conformation at both positive and negative potentials. There are two populations of channels; the main that functions in a lower open-state conductance with lower ion selectivity, that switch, in a voltage-dependent manner, from the open to a low-conducting 'closed' state and the other that has a normal ion selectivity in the typical high conductance, 'open' state. Its function is as follows. Catalyzes the scrambling of phospholipids across the outer mitochondrial membrane; the mechanism is unrelated to channel activity and is capable of translocating both anionic and zwitterionic phospholipids. The sequence is that of Non-selective voltage-gated ion channel VDAC2 from Xenopus laevis (African clawed frog).